The following is a 185-amino-acid chain: Thiol:disulfide interchange protein DsbE (185 aa).

At 1–4 (MKRN) the chain is on the cytoplasmic side. Residues 5 to 25 (VLLLPLLIFLLIAAALLWQLA) form a helical membrane-spanning segment. Residues 26 to 185 (RNAQGDDPTN…WDRYSREAAQ (160 aa)) lie on the Periplasmic side of the membrane. Residues 39-177 (ALTGKPVPAF…WESELKPLWD (139 aa)) form the Thioredoxin domain. Cysteine 80 and cysteine 83 are joined by a disulfide.

The protein belongs to the thioredoxin family. DsbE subfamily.

The protein resides in the cell inner membrane. Involved in disulfide bond formation. Catalyzes a late, reductive step in the assembly of periplasmic c-type cytochromes, probably the reduction of disulfide bonds of the apocytochrome c to allow covalent linkage with the heme. Possible subunit of a heme lyase. The chain is Thiol:disulfide interchange protein DsbE (dsbE1) from Salmonella typhi.